The primary structure comprises 999 residues: Transcription-repair-coupling factor (999 aa).

The 158-residue stretch at 499–656 (DLSSHRVMDR…LSQIKGISSL (158 aa)) folds into the Helicase ATP-binding domain. 512-519 (GDVGFGKT) is an ATP binding site. The DEEH box signature appears at 609–612 (DEEH). The Helicase C-terminal domain maps to 677–833 (LLKEIIYREL…SVAYHDLEIR (157 aa)).

This sequence in the N-terminal section; belongs to the UvrB family. The protein in the C-terminal section; belongs to the helicase family. RecG subfamily.

Its subcellular location is the cytoplasm. Its function is as follows. Couples transcription and DNA repair by recognizing RNA polymerase (RNAP) stalled at DNA lesions. Mediates ATP-dependent release of RNAP and its truncated transcript from the DNA, and recruitment of nucleotide excision repair machinery to the damaged site. The polypeptide is Transcription-repair-coupling factor (Helicobacter pylori (strain ATCC 700392 / 26695) (Campylobacter pylori)).